A 215-amino-acid polypeptide reads, in one-letter code: Ribulose-phosphate 3-epimerase (215 aa).

Serine 13 contributes to the substrate binding site. Histidine 38, aspartate 40, histidine 69, and aspartate 175 together coordinate a divalent metal cation. Aspartate 40 functions as the Proton acceptor in the catalytic mechanism. Substrate-binding positions include histidine 69, aspartate 175–glycine 177, and glycine 196–serine 197. Aspartate 175 serves as the catalytic Proton donor.

Belongs to the ribulose-phosphate 3-epimerase family. Requires a divalent metal cation as cofactor.

It catalyses the reaction D-ribulose 5-phosphate = D-xylulose 5-phosphate. The protein operates within carbohydrate degradation. Its function is as follows. Catalyzes the reversible epimerization of D-ribulose 5-phosphate to D-xylulose 5-phosphate. This chain is Ribulose-phosphate 3-epimerase, found in Mycoplasma pneumoniae (strain ATCC 29342 / M129 / Subtype 1) (Mycoplasmoides pneumoniae).